We begin with the raw amino-acid sequence, 421 residues long: Enolase (421 aa).

Gln162 is a (2R)-2-phosphoglycerate binding site. Glu204 acts as the Proton donor in catalysis. Residues Asp241, Glu284, and Asp311 each coordinate Mg(2+). (2R)-2-phosphoglycerate is bound by residues Lys336, Arg365, Ser366, and Lys387. Lys336 (proton acceptor) is an active-site residue.

The protein belongs to the enolase family. Requires Mg(2+) as cofactor.

The protein localises to the cytoplasm. The protein resides in the secreted. It is found in the cell surface. It catalyses the reaction (2R)-2-phosphoglycerate = phosphoenolpyruvate + H2O. The protein operates within carbohydrate degradation; glycolysis; pyruvate from D-glyceraldehyde 3-phosphate: step 4/5. Its function is as follows. Catalyzes the reversible conversion of 2-phosphoglycerate (2-PG) into phosphoenolpyruvate (PEP). It is essential for the degradation of carbohydrates via glycolysis. This is Enolase from Nitratiruptor sp. (strain SB155-2).